Reading from the N-terminus, the 422-residue chain is Glutamyl-tRNA reductase (422 aa).

Substrate contacts are provided by residues 50-53, serine 110, 115-117, and glutamine 121; these read TCNR and ETQ. Cysteine 51 functions as the Nucleophile in the catalytic mechanism. NADP(+) is bound at residue 190-195; the sequence is GAGEMS.

It belongs to the glutamyl-tRNA reductase family. In terms of assembly, homodimer.

It catalyses the reaction (S)-4-amino-5-oxopentanoate + tRNA(Glu) + NADP(+) = L-glutamyl-tRNA(Glu) + NADPH + H(+). The protein operates within porphyrin-containing compound metabolism; protoporphyrin-IX biosynthesis; 5-aminolevulinate from L-glutamyl-tRNA(Glu): step 1/2. Its function is as follows. Catalyzes the NADPH-dependent reduction of glutamyl-tRNA(Glu) to glutamate 1-semialdehyde (GSA). This chain is Glutamyl-tRNA reductase, found in Campylobacter fetus subsp. fetus (strain 82-40).